A 129-amino-acid polypeptide reads, in one-letter code: UPF0325 protein PC1_0937 (129 aa).

The protein belongs to the UPF0325 family.

The sequence is that of UPF0325 protein PC1_0937 from Pectobacterium carotovorum subsp. carotovorum (strain PC1).